The sequence spans 201 residues: Recombination protein RecR (201 aa).

A C4-type zinc finger spans residues 60 to 75 (CTSCGNVDTSDPCTIC). In terms of domain architecture, Toprim spans 83 to 178 (TTLVVVEDVS…KVTRLAHGVP (96 aa)).

It belongs to the RecR family.

Functionally, may play a role in DNA repair. It seems to be involved in an RecBC-independent recombinational process of DNA repair. It may act with RecF and RecO. This is Recombination protein RecR from Methylobacterium radiotolerans (strain ATCC 27329 / DSM 1819 / JCM 2831 / NBRC 15690 / NCIMB 10815 / 0-1).